We begin with the raw amino-acid sequence, 643 residues long: Phosphomethylpyrimidine synthase (643 aa).

Residues asparagine 221, methionine 250, tyrosine 279, histidine 315, 335–337 (SRG), 376–379 (DGLR), and glutamate 415 contribute to the substrate site. Histidine 419 contributes to the Zn(2+) binding site. Residue tyrosine 442 coordinates substrate. Residue histidine 483 coordinates Zn(2+). 3 residues coordinate [4Fe-4S] cluster: cysteine 563, cysteine 566, and cysteine 571.

It belongs to the ThiC family. As to quaternary structure, homodimer. [4Fe-4S] cluster is required as a cofactor.

The enzyme catalyses 5-amino-1-(5-phospho-beta-D-ribosyl)imidazole + S-adenosyl-L-methionine = 4-amino-2-methyl-5-(phosphooxymethyl)pyrimidine + CO + 5'-deoxyadenosine + formate + L-methionine + 3 H(+). It participates in cofactor biosynthesis; thiamine diphosphate biosynthesis. Its function is as follows. Catalyzes the synthesis of the hydroxymethylpyrimidine phosphate (HMP-P) moiety of thiamine from aminoimidazole ribotide (AIR) in a radical S-adenosyl-L-methionine (SAM)-dependent reaction. This Nitrobacter hamburgensis (strain DSM 10229 / NCIMB 13809 / X14) protein is Phosphomethylpyrimidine synthase.